We begin with the raw amino-acid sequence, 438 residues long: MDKTSRRDLLKLASLAGIGAGLARSQGSSKSMAGVSFKPNGTVRIGVIGTGGRGGSLIENFSAVEGVQITALCDTVKDKVLKQQAWLDKAGKASHPIALFHSDDHAFENLVKRDDVDLVVVSTPWVWHTRMAVAAMKQGKHVAVEVPAARTIDECWELVNTSEATQRHCIQLENCCYGYNEMMVLNMVRAGLFGELTHGGAAYNHDLRSILFSAEGEGEWRRFEHLNRDGNLYPTHGLGPVAHYMDVNRGDRFDTLVSMSSISASLQQYRKEKIPAGDPRQKEVYKEGDFNVSLIRTVKGRVIELEHNVSSPQPYDRINLIAGTKGIFRDYPPRIYFDGARREDFETLDRYKEKYEHPLWKKVGELAKELGGHGGMDFVMAYRLIQCMKEGTPPDIDVYDAAAWSAPGPLSEASVANGSAPQKFPDFTRGKWQTRQPV.

A signal peptide (tat-type signal) is located at residues 1–33 (MDKTSRRDLLKLASLAGIGAGLARSQGSSKSMA). Residues 52 to 53 (GR), aspartate 74, 125 to 128 (WVWH), 145 to 146 (EV), and asparagine 174 each bind NAD(+). Substrate-binding positions include tyrosine 203, arginine 221, 233–236 (YPTH), and tyrosine 315. Tyrosine 233 lines the NAD(+) pocket. Residues 408 to 438 (GPLSEASVANGSAPQKFPDFTRGKWQTRQPV) are disordered.

It belongs to the Gfo/Idh/MocA family. Glycosyl hydrolase 109 subfamily. NAD(+) is required as a cofactor. In terms of processing, predicted to be exported by the Tat system. The position of the signal peptide cleavage has not been experimentally proven.

Glycosidase. The polypeptide is Glycosyl hydrolase family 109 protein (Solibacter usitatus (strain Ellin6076)).